Consider the following 242-residue polypeptide: Small ribosomal subunit protein uS3 (242 aa).

The KH type-2 domain occupies 39 to 110 (IRRFIHKKYG…QVRINVVEVE (72 aa)). Residues 216 to 242 (QSMPVGASPRRRGNRRPQQFEDRSNEG) are disordered. Basic and acidic residues predominate over residues 233–242 (QQFEDRSNEG).

Belongs to the universal ribosomal protein uS3 family. As to quaternary structure, part of the 30S ribosomal subunit. Forms a tight complex with proteins S10 and S14.

Binds the lower part of the 30S subunit head. Binds mRNA in the 70S ribosome, positioning it for translation. In Prochlorococcus marinus (strain MIT 9303), this protein is Small ribosomal subunit protein uS3.